A 367-amino-acid polypeptide reads, in one-letter code: Heme A synthase 2 (367 aa).

5 helical membrane passes run 28–48 (MVAI…GIGA), 114–134 (MWGR…LWTG), 143–163 (WLVT…WMVA), 180–200 (VHYC…LTVL), and 221–241 (MAMG…FLSG). His-284 contacts heme. Helical transmembrane passes span 286–306 (LLGT…IRAD), 314–334 (AFLV…TTLV), and 340–360 (IGIV…WAWF). Heme is bound at residue His-344.

It belongs to the COX15/CtaA family. Type 2 subfamily. In terms of assembly, interacts with CtaB. Heme b is required as a cofactor.

Its subcellular location is the cell membrane. The enzyme catalyses Fe(II)-heme o + 2 A + H2O = Fe(II)-heme a + 2 AH2. It functions in the pathway porphyrin-containing compound metabolism; heme A biosynthesis; heme A from heme O: step 1/1. In terms of biological role, catalyzes the conversion of heme O to heme A by two successive hydroxylations of the methyl group at C8. The first hydroxylation forms heme I, the second hydroxylation results in an unstable dihydroxymethyl group, which spontaneously dehydrates, resulting in the formyl group of heme A. The polypeptide is Heme A synthase 2 (Acidiphilium cryptum (strain JF-5)).